The chain runs to 195 residues: Imidazoleglycerol-phosphate dehydratase (195 aa).

Belongs to the imidazoleglycerol-phosphate dehydratase family.

It is found in the cytoplasm. It catalyses the reaction D-erythro-1-(imidazol-4-yl)glycerol 3-phosphate = 3-(imidazol-4-yl)-2-oxopropyl phosphate + H2O. Its pathway is amino-acid biosynthesis; L-histidine biosynthesis; L-histidine from 5-phospho-alpha-D-ribose 1-diphosphate: step 6/9. The sequence is that of Imidazoleglycerol-phosphate dehydratase from Beijerinckia indica subsp. indica (strain ATCC 9039 / DSM 1715 / NCIMB 8712).